Here is an 89-residue protein sequence, read N- to C-terminus: Dynein light chain (89 aa).

This sequence belongs to the dynein light chain family. In terms of tissue distribution, tegument.

It localises to the cytoplasm. Its subcellular location is the cytoskeleton. In terms of biological role, acts as a non-catalytic accessory component of a dynein complex. This chain is Dynein light chain (DLC), found in Schistosoma mansoni (Blood fluke).